The sequence spans 121 residues: Large ribosomal subunit protein bL12 (121 aa).

This sequence belongs to the bacterial ribosomal protein bL12 family. In terms of assembly, homodimer. Part of the ribosomal stalk of the 50S ribosomal subunit. Forms a multimeric L10(L12)X complex, where L10 forms an elongated spine to which 2 to 4 L12 dimers bind in a sequential fashion. Binds GTP-bound translation factors.

Functionally, forms part of the ribosomal stalk which helps the ribosome interact with GTP-bound translation factors. Is thus essential for accurate translation. In Lachnospira eligens (strain ATCC 27750 / DSM 3376 / VPI C15-48 / C15-B4) (Eubacterium eligens), this protein is Large ribosomal subunit protein bL12.